Here is a 358-residue protein sequence, read N- to C-terminus: MQEWFQNLFAATLGLGDLGITVGLVVSVIVKIVIILIPLILTVAYLTYFERKVIGFMQLRVGPNVTGPWGLIQPFADVFKLLFKEVTRPKLSNKALFYIGPIMSLAPSFAAWAVIPFNEEWVLTNINIGLLYILMITSLSVYGVIIAGWASNSKYSFLGAMRASAQSISYEIAMSAALVCVVMVSGSMNFSDIVAAQAKGIAGGSVFSWNWLPLFPIFIVYLISAVAETNRAPFDVAEGESEIVAGHHVEYSGFAFALFFLAEYIFMILIAALTSLMFLGGWLSPFPQSWGIVGTPSAFWMFAKMAAVLYWYLWIRATFPRYRYDQIMRLGWKVLIPIGFAYIVILGVWMISPLNLWK.

8 helical membrane-spanning segments follow: residues Ile-20 to Ile-40, Ala-95 to Ile-115, Ile-128 to Gly-148, Ile-168 to Met-188, Val-206 to Val-226, Gly-253 to Leu-273, Thr-295 to Ile-315, and Val-334 to Leu-354.

Belongs to the complex I subunit 1 family. As to quaternary structure, NDH-1 is composed of 14 different subunits. Subunits NuoA, H, J, K, L, M, N constitute the membrane sector of the complex.

The protein resides in the cell inner membrane. The enzyme catalyses a quinone + NADH + 5 H(+)(in) = a quinol + NAD(+) + 4 H(+)(out). NDH-1 shuttles electrons from NADH, via FMN and iron-sulfur (Fe-S) centers, to quinones in the respiratory chain. The immediate electron acceptor for the enzyme in this species is believed to be ubiquinone. Couples the redox reaction to proton translocation (for every two electrons transferred, four hydrogen ions are translocated across the cytoplasmic membrane), and thus conserves the redox energy in a proton gradient. This subunit may bind ubiquinone. The protein is NADH-quinone oxidoreductase subunit H of Neisseria meningitidis serogroup B (strain ATCC BAA-335 / MC58).